We begin with the raw amino-acid sequence, 336 residues long: 4-hydroxythreonine-4-phosphate dehydrogenase (336 aa).

Threonine 140 lines the substrate pocket. Residues histidine 171, histidine 216, and histidine 271 each contribute to the a divalent metal cation site. The substrate site is built by lysine 279, asparagine 288, and arginine 297.

This sequence belongs to the PdxA family. As to quaternary structure, homodimer. It depends on Zn(2+) as a cofactor. Mg(2+) is required as a cofactor. Requires Co(2+) as cofactor.

The protein localises to the cytoplasm. It carries out the reaction 4-(phosphooxy)-L-threonine + NAD(+) = 3-amino-2-oxopropyl phosphate + CO2 + NADH. The protein operates within cofactor biosynthesis; pyridoxine 5'-phosphate biosynthesis; pyridoxine 5'-phosphate from D-erythrose 4-phosphate: step 4/5. Functionally, catalyzes the NAD(P)-dependent oxidation of 4-(phosphooxy)-L-threonine (HTP) into 2-amino-3-oxo-4-(phosphooxy)butyric acid which spontaneously decarboxylates to form 3-amino-2-oxopropyl phosphate (AHAP). This Erythrobacter litoralis (strain HTCC2594) protein is 4-hydroxythreonine-4-phosphate dehydrogenase.